We begin with the raw amino-acid sequence, 440 residues long: tRNA(Ile)-lysidine synthase (440 aa).

An ATP-binding site is contributed by 25-30; it reads SGGVDS.

This sequence belongs to the tRNA(Ile)-lysidine synthase family.

It is found in the cytoplasm. The catalysed reaction is cytidine(34) in tRNA(Ile2) + L-lysine + ATP = lysidine(34) in tRNA(Ile2) + AMP + diphosphate + H(+). Functionally, ligates lysine onto the cytidine present at position 34 of the AUA codon-specific tRNA(Ile) that contains the anticodon CAU, in an ATP-dependent manner. Cytidine is converted to lysidine, thus changing the amino acid specificity of the tRNA from methionine to isoleucine. The protein is tRNA(Ile)-lysidine synthase of Vibrio cholerae serotype O1 (strain ATCC 39315 / El Tor Inaba N16961).